The sequence spans 380 residues: Cytochrome b (380 aa).

4 consecutive transmembrane segments (helical) span residues 34–54 (FGSLLGICLMTQILTGLLLAM), 78–99 (WLIRNLHANGASLFFICIYLHI), 114–134 (WNTGVILLLTLMATAFVGYVL), and 179–199 (FFALHFLLPFIIAGLTLIHLT). Heme b is bound by residues H84 and H98. 2 residues coordinate heme b: H183 and H197. Residue H202 participates in a ubiquinone binding. 4 consecutive transmembrane segments (helical) span residues 227–247 (TKDILGFIILLLPLMTLAMFA), 289–309 (LGGVLALAASVLVLFLAPFLH), 321–341 (LSQLLFWTLVANLFILTWIGS), and 348–368 (FIITGQLASLTYFTILLILFP).

The protein belongs to the cytochrome b family. The cytochrome bc1 complex contains 11 subunits: 3 respiratory subunits (MT-CYB, CYC1 and UQCRFS1), 2 core proteins (UQCRC1 and UQCRC2) and 6 low-molecular weight proteins (UQCRH/QCR6, UQCRB/QCR7, UQCRQ/QCR8, UQCR10/QCR9, UQCR11/QCR10 and a cleavage product of UQCRFS1). This cytochrome bc1 complex then forms a dimer. The cofactor is heme b.

It is found in the mitochondrion inner membrane. Component of the ubiquinol-cytochrome c reductase complex (complex III or cytochrome b-c1 complex) that is part of the mitochondrial respiratory chain. The b-c1 complex mediates electron transfer from ubiquinol to cytochrome c. Contributes to the generation of a proton gradient across the mitochondrial membrane that is then used for ATP synthesis. The protein is Cytochrome b (MT-CYB) of Aphanotriccus audax (Black-billed flycatcher).